A 356-amino-acid chain; its full sequence is Metacaspase-1 (356 aa).

The disordered stretch occupies residues 1-47 (MYSGRSGAPPPAHSPYPNSYNHGPPGHSAGHNVPPPPPTQPVQFGHG). Catalysis depends on residues His147 and Cys203.

Belongs to the peptidase C14B family.

Involved in cell death (apoptosis). In Ajellomyces capsulatus (strain NAm1 / WU24) (Darling's disease fungus), this protein is Metacaspase-1 (MCA1).